A 387-amino-acid polypeptide reads, in one-letter code: Hydroxycarboxylic acid receptor 3 (387 aa).

Residues 1–28 are Extracellular-facing; the sequence is MNRHHLQDHFLEIDKKNCCVFRDDFIAK. The chain crosses the membrane as a helical span at residues 29-50; that stretch reads VLPPVLGLEFIFGLLGNGLALW. Residues 51-63 are Cytoplasmic-facing; the sequence is IFCFHLKSWKSSR. A helical membrane pass occupies residues 64-85; sequence IFLFNLAVADFLLIICLPFVMD. Residues 86–102 lie on the Extracellular side of the membrane; the sequence is YYVRRSDWKFGDIPCRL. Cysteine 100 and cysteine 177 form a disulfide bridge. The helical transmembrane segment at 103 to 123 threads the bilayer; that stretch reads VLFMFAMNRQGSIIFLTVVAV. The Cytoplasmic portion of the chain corresponds to 124–142; the sequence is DRYFRVVHPHHALNKISNW. The chain crosses the membrane as a helical span at residues 143 to 163; that stretch reads TAAIISCLLWGITVGLTVHLL. The Extracellular portion of the chain corresponds to 164-194; it reads KKKLLIQNGTANVCISFSICHTFRWHEAMFL. A helical transmembrane segment spans residues 195 to 209; it reads LEFFLPLGIILFCSA. Topologically, residues 210-236 are cytoplasmic; that stretch reads RIIWSLRQRQMDRHAKIKRAITFIMVV. The chain crosses the membrane as a helical span at residues 237–256; the sequence is AIVFVICFLPSVVVRIHIFW. Residues 257 to 273 lie on the Extracellular side of the membrane; the sequence is LLHTSGTQNCEVYRSVD. A helical transmembrane segment spans residues 274–298; that stretch reads LAFFITLSFTYMNSMLDPVVYYFSS. The Cytoplasmic portion of the chain corresponds to 299–387; that stretch reads PSFPNFFSTL…LEKQLGCCIE (89 aa). Positions 319–343 are disordered; sequence GEPDNNRSTSVELTGDPNKTRGAPE.

Belongs to the G-protein coupled receptor 1 family. As to expression, expression largely restricted to adipose tissue and spleen.

Its subcellular location is the cell membrane. Functionally, receptor for 3-OH-octanoid acid mediates a negative feedback regulation of adipocyte lipolysis to counteract prolipolytic influences under conditions of physiological or pathological increases in beta-oxidation rates. Acts as a low affinity receptor for nicotinic acid. This pharmacological effect requires nicotinic acid doses that are much higher than those provided by a normal diet. The sequence is that of Hydroxycarboxylic acid receptor 3 (HCAR3) from Homo sapiens (Human).